A 232-amino-acid chain; its full sequence is Small ribosomal subunit protein uS3 (232 aa).

The 69-residue stretch at V39 to R107 folds into the KH type-2 domain. The tract at residues A213–K232 is disordered.

It belongs to the universal ribosomal protein uS3 family. Part of the 30S ribosomal subunit. Forms a tight complex with proteins S10 and S14.

Binds the lower part of the 30S subunit head. Binds mRNA in the 70S ribosome, positioning it for translation. The chain is Small ribosomal subunit protein uS3 from Vibrio campbellii (strain ATCC BAA-1116).